The chain runs to 36 residues: Photosystem I reaction center subunit VIII (36 aa).

A helical membrane pass occupies residues 1–21 (MITFSFPSIFVPLVGLVFPAI).

This sequence belongs to the PsaI family.

The protein localises to the plastid. Its subcellular location is the chloroplast thylakoid membrane. Functionally, may help in the organization of the PsaL subunit. The protein is Photosystem I reaction center subunit VIII of Coffea arabica (Arabian coffee).